The chain runs to 157 residues: 2-C-methyl-D-erythritol 2,4-cyclodiphosphate synthase (157 aa).

A divalent metal cation-binding residues include aspartate 8 and histidine 10. 4-CDP-2-C-methyl-D-erythritol 2-phosphate is bound by residues aspartate 8–histidine 10 and histidine 34–serine 35. A divalent metal cation is bound at residue histidine 42. Residues aspartate 56 to glycine 58, threonine 132 to glutamate 135, and arginine 142 each bind 4-CDP-2-C-methyl-D-erythritol 2-phosphate.

The protein belongs to the IspF family. Homotrimer. It depends on a divalent metal cation as a cofactor.

It catalyses the reaction 4-CDP-2-C-methyl-D-erythritol 2-phosphate = 2-C-methyl-D-erythritol 2,4-cyclic diphosphate + CMP. Its pathway is isoprenoid biosynthesis; isopentenyl diphosphate biosynthesis via DXP pathway; isopentenyl diphosphate from 1-deoxy-D-xylulose 5-phosphate: step 4/6. In terms of biological role, involved in the biosynthesis of isopentenyl diphosphate (IPP) and dimethylallyl diphosphate (DMAPP), two major building blocks of isoprenoid compounds. Catalyzes the conversion of 4-diphosphocytidyl-2-C-methyl-D-erythritol 2-phosphate (CDP-ME2P) to 2-C-methyl-D-erythritol 2,4-cyclodiphosphate (ME-CPP) with a corresponding release of cytidine 5-monophosphate (CMP). The sequence is that of 2-C-methyl-D-erythritol 2,4-cyclodiphosphate synthase from Chlorobium phaeovibrioides (strain DSM 265 / 1930) (Prosthecochloris vibrioformis (strain DSM 265)).